A 555-amino-acid chain; its full sequence is Neurofilament light polypeptide (555 aa).

Ser2 carries the N-acetylserine modification. The tract at residues 2-93 (SSFSYEPYYS…KSIRTQEKAQ (92 aa)) is head. Arg23 carries the post-translational modification Asymmetric dimethylarginine; alternate. The residue at position 23 (Arg23) is an Omega-N-methylarginine; alternate. Omega-N-methylarginine is present on Arg30. Tyr43 bears the Phosphotyrosine mark. A phosphoserine mark is found at Ser56, Ser67, and Ser103. An IF rod domain is found at 90-401 (EKAQLQDLND…KLLEGEETRL (312 aa)). The interval 94–125 (LQDLNDRFASFIERVHELEQQNKVLEAELLVL) is coil 1A. The linker 1 stretch occupies residues 126-138 (RQKHSEPSRFRAL). The segment at 139–234 (YEQEIRDLRL…KVHEEEIAEL (96 aa)) is coil 1B. Positions 235–253 (QAQIQYAQISVEMDVSSKP) are linker 12. The segment at 254 to 272 (DLSAALKDIRAQYEKLAAK) is coil 2A. Residues 273–281 (NMQNAEEWF) form a linker 2 region. Residues 282-397 (KSRFTVLTES…AAYRKLLEGE (116 aa)) form a coil 2B region. The segment at 398-444 (ETRLSFTSVGSLTTGYTQSSQVFGRSAYGGLQTSSYLMSARSFPSYY) is tail, subdomain A. The tract at residues 398–555 (ETRLSFTSVG…GEEQATKKKD (158 aa)) is tail. The tract at residues 445–555 (TSHVQEEQIE…GEEQATKKKD (111 aa)) is tail, subdomain B (acidic). The disordered stretch occupies residues 463–555 (KAEEAKDEPP…GEEQATKKKD (93 aa)). The span at 472-540 (PSEGEAEEEE…ETKEAEEEEK (69 aa)) shows a compositional bias: acidic residues. Position 473 is a phosphoserine (Ser473). Phosphothreonine is present on Thr532. The segment covering 541-555 (KDEGAGEEQATKKKD) has biased composition (basic and acidic residues).

It belongs to the intermediate filament family. In terms of assembly, forms homodimers (in vitro). Forms heterodimers with NEFH or NEFM; which can further hetero-oligomerize (in vitro). Forms heterodimers with INA (in vitro). Interacts with ARHGEF28. Interacts with TRIM2. O-glycosylated. Post-translationally, phosphorylated in the head and rod regions by the PKC kinase PKN1, leading to the inhibition of polymerization. In terms of processing, ubiquitinated in the presence of TRIM2 and UBE2D1.

It localises to the cell projection. Its subcellular location is the axon. It is found in the cytoplasm. The protein resides in the cytoskeleton. Functionally, neurofilaments usually contain three intermediate filament proteins: NEFL, NEFM, and NEFH which are involved in the maintenance of neuronal caliber. May additionally cooperate with the neuronal intermediate filament proteins PRPH and INA to form neuronal filamentous networks. The protein is Neurofilament light polypeptide (NEFL) of Bos taurus (Bovine).